The sequence spans 201 residues: FMN-dependent NADH:quinone oxidoreductase (201 aa).

FMN contacts are provided by residues S10, 16-18 (SQS), 96-99 (MYNF), and 140-143 (SRGG).

The protein belongs to the azoreductase type 1 family. As to quaternary structure, homodimer. The cofactor is FMN.

It carries out the reaction 2 a quinone + NADH + H(+) = 2 a 1,4-benzosemiquinone + NAD(+). The catalysed reaction is N,N-dimethyl-1,4-phenylenediamine + anthranilate + 2 NAD(+) = 2-(4-dimethylaminophenyl)diazenylbenzoate + 2 NADH + 2 H(+). In terms of biological role, quinone reductase that provides resistance to thiol-specific stress caused by electrophilic quinones. Functionally, also exhibits azoreductase activity. Catalyzes the reductive cleavage of the azo bond in aromatic azo compounds to the corresponding amines. This Escherichia coli O6:H1 (strain CFT073 / ATCC 700928 / UPEC) protein is FMN-dependent NADH:quinone oxidoreductase.